Reading from the N-terminus, the 119-residue chain is UPF0102 protein FP2501 (119 aa).

This sequence belongs to the UPF0102 family.

The protein is UPF0102 protein FP2501 of Flavobacterium psychrophilum (strain ATCC 49511 / DSM 21280 / CIP 103535 / JIP02/86).